The following is a 434-amino-acid chain: D-amino acid dehydrogenase (434 aa).

3–17 (VIVLGSGVIGTTTAY) is a binding site for FAD.

The protein belongs to the DadA oxidoreductase family. Requires FAD as cofactor.

The catalysed reaction is a D-alpha-amino acid + A + H2O = a 2-oxocarboxylate + AH2 + NH4(+). In terms of biological role, oxidative deamination of D-amino acids. The sequence is that of D-amino acid dehydrogenase from Bordetella parapertussis (strain 12822 / ATCC BAA-587 / NCTC 13253).